We begin with the raw amino-acid sequence, 675 residues long: Potassium-transporting ATPase ATP-binding subunit (675 aa).

4 consecutive transmembrane segments (helical) span residues 34–54 (IMFVVEVGMILTLILICFPDI), 65–85 (LITIFIILLITILFANFSEAF), 216–236 (IALFTLLTTLTIIFLVVIVTL), and 245–265 (LILPIAMLIALTVCLIPTTIG). Asp-304 acts as the 4-aspartylphosphate intermediate in catalysis. Residues Asp-341, Glu-345, 372 to 379 (FTAETRMS), and Lys-390 contribute to the ATP site. Positions 513 and 517 each coordinate Mg(2+). 3 helical membrane passes run 569–591 (ALTTFSLANDVAKYFAILPALMM), 611–631 (AIISALIFNALIIVALIPIAM), and 644–664 (IFINNMLIYGLGGLIVPFLGI).

Belongs to the cation transport ATPase (P-type) (TC 3.A.3) family. Type IA subfamily. In terms of assembly, the system is composed of three essential subunits: KdpA, KdpB and KdpC.

The protein localises to the cell membrane. The enzyme catalyses K(+)(out) + ATP + H2O = K(+)(in) + ADP + phosphate + H(+). Its function is as follows. Part of the high-affinity ATP-driven potassium transport (or Kdp) system, which catalyzes the hydrolysis of ATP coupled with the electrogenic transport of potassium into the cytoplasm. This subunit is responsible for energy coupling to the transport system and for the release of the potassium ions to the cytoplasm. This is Potassium-transporting ATPase ATP-binding subunit from Staphylococcus aureus (strain MSSA476).